The following is a 328-amino-acid chain: Fructose-1,6-bisphosphatase class 1 (328 aa).

Residues Glu-91, Asp-110, Leu-112, and Asp-113 each contribute to the Mg(2+) site. Substrate contacts are provided by residues 113–116 (DGSS), Asn-205, and 257–259 (YLY). Residue Glu-277 participates in Mg(2+) binding.

This sequence belongs to the FBPase class 1 family. Homotetramer. Mg(2+) is required as a cofactor.

The protein localises to the cytoplasm. It carries out the reaction beta-D-fructose 1,6-bisphosphate + H2O = beta-D-fructose 6-phosphate + phosphate. The protein operates within carbohydrate biosynthesis; gluconeogenesis. This Azorhizobium caulinodans (strain ATCC 43989 / DSM 5975 / JCM 20966 / LMG 6465 / NBRC 14845 / NCIMB 13405 / ORS 571) protein is Fructose-1,6-bisphosphatase class 1.